The primary structure comprises 340 residues: uncharacterized protein (340 aa).

Positions 1–20 (MGGARRLKLDGSIPNQLARA) are cleaved as a signal peptide.

This is an uncharacterized protein from Mycobacterium tuberculosis (strain CDC 1551 / Oshkosh).